Consider the following 426-residue polypeptide: GTPase HflX (426 aa).

Residues 198–365 (PTVSLVGYTN…ALTERLSGEV (168 aa)) enclose the Hflx-type G domain. Residues 204-211 (GYTNAGKS), 229-233 (FATLD), 251-254 (DTVG), 317-320 (NKID), and 343-345 (SAQ) each bind GTP. Mg(2+) is bound by residues Ser211 and Thr231.

It belongs to the TRAFAC class OBG-HflX-like GTPase superfamily. HflX GTPase family. Monomer. Associates with the 50S ribosomal subunit. This interaction occurs in the presence of GTP, GDP, ATP or ADP, but not in their absence. The cofactor is Mg(2+).

It is found in the cytoplasm. Intrinsic GTPase activity is very slow and can be stimulated by the presence of 50S ribosomal subunits or 70S ribosomes. GTPase activity is inhibited by ATP. GTPase that associates with the 50S ribosomal subunit and may have a role during protein synthesis or ribosome biogenesis. In vitro, also exhibits ATPase activity. The polypeptide is GTPase HflX (Escherichia coli (strain K12)).